The primary structure comprises 222 residues: Transmembrane reductase CYB561D2 (222 aa).

Residues 2 to 17 are Cytoplasmic-facing; the sequence is ALSVETESHIYRALRT. Residues 14–217 form the Cytochrome b561 domain; the sequence is ALRTASGAAA…NQVSNAYLYR (204 aa). Residues 18 to 38 traverse the membrane as a helical segment; that stretch reads ASGAAAHLVALGFTIFVAVLA. At 39–46 the chain is on the lumenal side; sequence RPGSSLFS. A helical membrane pass occupies residues 47–67; it reads WHPVLMSLAFSFLMTEALLMF. H48 provides a ligand contact to heme b. Residues 68-85 lie on the Cytoplasmic side of the membrane; the sequence is SPESSLLRSLSRKVRARC. Heme b contacts are provided by H86 and H120. A helical membrane pass occupies residues 86 to 106; the sequence is HWVLQLLALLCALLGLGLVIL. Residues 107–122 lie on the Lumenal side of the membrane; sequence HKEQLGKAHLTTRHGQ. The helical transmembrane segment at 123–143 threads the bilayer; that stretch reads AGLLAVLWAGLQCSGGMGLLY. At 144 to 162 the chain is on the cytoplasmic side; the sequence is PKLLPRWPLAKLKLYHATS. H159 is a binding site for heme b. A helical transmembrane segment spans residues 163-183; sequence GLVGYLLGSASLLLGMFSLWF. The Lumenal portion of the chain corresponds to 184 to 186; that stretch reads TAT. Residues 187–207 form a helical membrane-spanning segment; sequence VTGGAWYLAVLCPILTSLVIM. The Cytoplasmic portion of the chain corresponds to 208–222; sequence NQVSNAYLYRKRIQP.

Heme b serves as cofactor. In terms of tissue distribution, highly expressed in the brain, lung, liver, and kidney. Moderately expressed in the heart, placenta, skeletal muscle, and pancreas.

It is found in the endoplasmic reticulum membrane. It localises to the cytoplasmic vesicle membrane. The catalysed reaction is monodehydro-L-ascorbate radical(out) + L-ascorbate(in) = monodehydro-L-ascorbate radical(in) + L-ascorbate(out). It carries out the reaction Fe(3+)(out) + L-ascorbate(in) = monodehydro-L-ascorbate radical(in) + Fe(2+)(out) + H(+). Functionally, transmembrane reductase that may use ascorbate as an electron donor in the cytoplasm and transfer electrons across endoplasmic reticulum membranes to reduce monodehydro-L-ascorbate radical and iron cations Fe(3+) in the lumen of that compartment. The chain is Transmembrane reductase CYB561D2 from Mus musculus (Mouse).